Consider the following 408-residue polypeptide: Tripartite motif containing 13 (408 aa).

The segment at 10-58 adopts an RING-type zinc-finger fold; sequence CPICCSLFDDPRVLPCSHNFCKKCLDGVLEENSRTMQWRPSSFKCPTCR. The B box-type zinc-finger motif lies at 89 to 131; that stretch reads PKMPVCKEHSDQPLNIFCSTDLKLICGSCATTGEHKKHVFSSI. Residues Cys-94, His-97, Cys-117, and His-123 each coordinate Zn(2+). A helical transmembrane segment spans residues 322 to 342; that stretch reads ILVVACLILLLVTFLCAYPFI.

It is found in the endoplasmic reticulum membrane. The protein operates within protein modification; protein ubiquitination. E3 ubiquitin ligase involved in the retrotranslocation and turnover of membrane and secretory proteins from the ER through a set of processes named ER-associated degradation (ERAD). This process acts on misfolded proteins as well as in the regulated degradation of correctly folded proteins. The sequence is that of Tripartite motif containing 13 (trim13) from Xenopus tropicalis (Western clawed frog).